A 435-amino-acid polypeptide reads, in one-letter code: Putative pyridoxal-phosphate dependent protein F13B12.4 (435 aa).

An N-terminal signal peptide occupies residues 1–18 (MKLLLLALFLSISASCLA). Asparagine 79 carries an N-linked (GlcNAc...) asparagine glycan. At lysine 89 the chain carries N6-(pyridoxal phosphate)lysine. 235-239 (GTGGT) provides a ligand contact to pyridoxal 5'-phosphate. N-linked (GlcNAc...) asparagine glycosylation is present at asparagine 277. Serine 342 provides a ligand contact to pyridoxal 5'-phosphate.

This sequence belongs to the cysteine synthase/cystathionine beta-synthase family. Highly divergent.

The protein is Putative pyridoxal-phosphate dependent protein F13B12.4 of Caenorhabditis elegans.